Here is a 383-residue protein sequence, read N- to C-terminus: MKAGKSERERSGRRRHRSGDALTTVVVKQERLSPEPVAHRRPDAPAASLSPPAAEPGHSGHRGSRARSPAKKKSKSSGRRSKSPRTKRSQSPHYPMVKVKQEREDHPRRGREDRQHREPSEQEHRRARNSERDRHRGHSRQGRSSDERPVSGQDRDRDSQNLQAQEEERDFHNARRREHRQQNESAGSEAQEVIPRPAGNRSKEVPVKEKPSFELSGALLEDTNTFRGVVIKYSEPPEARIPKKRWRLYPFKNDEVLPVMYIHRQSAYLLGRHRRIADIPIDHPSCSKQHAVFQYRLVEYTRADGTVGRRVKPYIIDLGSGNGTFLNNKRIEPQRYYELKEKDVLKFGFSSREYVLLHESSDTSELDRKEDEDDEEEEMVSDS.

A compositionally biased stretch (basic and acidic residues) spans 1–10 (MKAGKSERER). Positions 1–209 (MKAGKSERER…NRSKEVPVKE (209 aa)) are disordered. At Ser-18 the chain carries Phosphoserine. Residue Lys-28 forms a Glycyl lysine isopeptide (Lys-Gly) (interchain with G-Cter in SUMO); alternate linkage. A Glycyl lysine isopeptide (Lys-Gly) (interchain with G-Cter in SUMO1); alternate cross-link involves residue Lys-28. Residue Lys-28 forms a Glycyl lysine isopeptide (Lys-Gly) (interchain with G-Cter in SUMO2); alternate linkage. Residues 28–43 (KQERLSPEPVAHRRPD) show a composition bias toward basic and acidic residues. Residues Ser-33, Ser-48, and Ser-50 each carry the phosphoserine modification. The span at 44–56 (APAASLSPPAAEP) shows a compositional bias: low complexity. Positions 59–90 (SGHRGSRARSPAKKKSKSSGRRSKSPRTKRSQ) are enriched in basic residues. Ser-91 is modified (phosphoserine). Composition is skewed to basic and acidic residues over residues 99–134 (VKQE…ERDR) and 143–159 (RSSD…DRDS). A Glycyl lysine isopeptide (Lys-Gly) (interchain with G-Cter in SUMO2) cross-link involves residue Lys-100. Ser-145 carries the phosphoserine modification. Residues 153–194 (QDRDRDSQNLQAQEEERDFHNARRREHRQQNESAGSEAQEVI) adopt a coiled-coil conformation. Lys-210 is covalently cross-linked (Glycyl lysine isopeptide (Lys-Gly) (interchain with G-Cter in SUMO2)). One can recognise an FHA domain in the interval 268–331 (YLLGRHRRIA…NGTFLNNKRI (64 aa)). A compositionally biased stretch (basic and acidic residues) spans 359–369 (ESSDTSELDRK). Residues 359–383 (ESSDTSELDRKEDEDDEEEEMVSDS) form a disordered region. Acidic residues predominate over residues 370–383 (EDEDDEEEEMVSDS). Ser-381 bears the Phosphoserine mark.

Component of activated spliceosome complexes. Binds SMAD4 and CREBBP/EP300. Component of the minor spliceosome, which splices U12-type introns. Binds the SMAD1/OAZ1/PSMB4 complex. Interacts with DROSHA and SMARCA4. Component of the SNARP complex which consists at least of SNIP1, SNW1, THRAP3, BCLAF1 and PNN. Degraded by the proteasome upon binding to the SMAD1/OAZ1/PSMB4 complex.

The protein localises to the nucleus. Functionally, required for pre-mRNA splicing as component of the spliceosome. As a component of the minor spliceosome, involved in the splicing of U12-type introns in pre-mRNAs. Down-regulates NF-kappa-B signaling by competing with RELA for CREBBP/EP300 binding. Involved in the microRNA (miRNA) biogenesis. May be involved in cyclin-D1/CCND1 mRNA stability through the SNARP complex which associates with both the 3'end of the CCND1 gene and its mRNA. The protein is Smad nuclear-interacting protein 1 (Snip1) of Mus musculus (Mouse).